The primary structure comprises 456 residues: Bifunctional protein GlmU (456 aa).

A pyrophosphorylase region spans residues 1-229 (MLNSAMSVVI…ISETDGVNNR (229 aa)). UDP-N-acetyl-alpha-D-glucosamine is bound by residues 11–14 (LAAG), lysine 25, glutamine 76, 81–82 (GT), 103–105 (YGD), glycine 140, glutamate 154, asparagine 169, and asparagine 227. A Mg(2+)-binding site is contributed by aspartate 105. A Mg(2+)-binding site is contributed by asparagine 227. The segment at 230 to 250 (LQLSRLERIYQAEQAEKLLLS) is linker. Positions 251–456 (GVMLRDPARF…QGWQRPVKKK (206 aa)) are N-acetyltransferase. Residues arginine 333 and lysine 351 each coordinate UDP-N-acetyl-alpha-D-glucosamine. Histidine 363 acts as the Proton acceptor in catalysis. The UDP-N-acetyl-alpha-D-glucosamine site is built by tyrosine 366 and asparagine 377. Acetyl-CoA is bound by residues alanine 380, 386–387 (NY), serine 405, alanine 423, and arginine 440.

In the N-terminal section; belongs to the N-acetylglucosamine-1-phosphate uridyltransferase family. It in the C-terminal section; belongs to the transferase hexapeptide repeat family. As to quaternary structure, homotrimer. Mg(2+) is required as a cofactor.

It is found in the cytoplasm. It catalyses the reaction alpha-D-glucosamine 1-phosphate + acetyl-CoA = N-acetyl-alpha-D-glucosamine 1-phosphate + CoA + H(+). It carries out the reaction N-acetyl-alpha-D-glucosamine 1-phosphate + UTP + H(+) = UDP-N-acetyl-alpha-D-glucosamine + diphosphate. It participates in nucleotide-sugar biosynthesis; UDP-N-acetyl-alpha-D-glucosamine biosynthesis; N-acetyl-alpha-D-glucosamine 1-phosphate from alpha-D-glucosamine 6-phosphate (route II): step 2/2. It functions in the pathway nucleotide-sugar biosynthesis; UDP-N-acetyl-alpha-D-glucosamine biosynthesis; UDP-N-acetyl-alpha-D-glucosamine from N-acetyl-alpha-D-glucosamine 1-phosphate: step 1/1. Its pathway is bacterial outer membrane biogenesis; LPS lipid A biosynthesis. Catalyzes the last two sequential reactions in the de novo biosynthetic pathway for UDP-N-acetylglucosamine (UDP-GlcNAc). The C-terminal domain catalyzes the transfer of acetyl group from acetyl coenzyme A to glucosamine-1-phosphate (GlcN-1-P) to produce N-acetylglucosamine-1-phosphate (GlcNAc-1-P), which is converted into UDP-GlcNAc by the transfer of uridine 5-monophosphate (from uridine 5-triphosphate), a reaction catalyzed by the N-terminal domain. This chain is Bifunctional protein GlmU, found in Salmonella agona (strain SL483).